Here is an 81-residue protein sequence, read N- to C-terminus: Three-finger toxin 3FTx-Oxy6 (81 aa).

The N-terminal stretch at Met1–Thr21 is a signal peptide. 4 disulfides stabilise this stretch: Cys24-Cys43, Cys36-Cys61, Cys65-Cys73, and Cys74-Cys79.

The protein belongs to the three-finger toxin family. Short-chain subfamily. In terms of tissue distribution, expressed by the venom gland.

The protein localises to the secreted. In Oxyuranus microlepidotus (Inland taipan), this protein is Three-finger toxin 3FTx-Oxy6.